The chain runs to 210 residues: Putative polysaccharide-binding protein (210 aa).

Positions 1-22 (MGFLKGTAAALTLLSAAAAASA) are cleaved as a signal peptide. 4 CBM1 domains span residues 23–62 (CGVL…AMPG), 63–105 (MMGQ…LANK), 125–165 (CGKE…APPP), and 166–210 (KMGE…PMHP).

In Porphyra purpurea (Red seaweed), this protein is Putative polysaccharide-binding protein.